A 109-amino-acid chain; its full sequence is CRISPR-associated endoribonuclease Cas2 (109 aa).

D8 serves as a coordination point for Mg(2+).

This sequence belongs to the CRISPR-associated endoribonuclease Cas2 protein family. Homodimer, forms a heterotetramer with a Cas1 homodimer. Mg(2+) serves as cofactor.

In terms of biological role, CRISPR (clustered regularly interspaced short palindromic repeat), is an adaptive immune system that provides protection against mobile genetic elements (viruses, transposable elements and conjugative plasmids). CRISPR clusters contain sequences complementary to antecedent mobile elements and target invading nucleic acids. CRISPR clusters are transcribed and processed into CRISPR RNA (crRNA). Functions as a ssRNA-specific endoribonuclease. Involved in the integration of spacer DNA into the CRISPR cassette. In Streptococcus mutans serotype c (strain ATCC 700610 / UA159), this protein is CRISPR-associated endoribonuclease Cas2.